The chain runs to 649 residues: Microtubule-associated protein VP6 (649 aa).

It localises to the virion. Its subcellular location is the host cytoplasm. The protein localises to the host cytoskeleton. In terms of biological role, minor inner capsid component. Displays NTPase and RNA 5'-triphosphatase (RTPase) activities. May function as a cofactor of polymerase VP2. Associates with microtubules and plays a role in the formation, structural organization and morphology of viral inclusions, where the assembly of cores and the replication of viral RNA occur. The chain is Microtubule-associated protein VP6 (S6) from Cryphonectria parasitica (Chestnut blight fungus).